The following is a 253-amino-acid chain: Small ribosomal subunit protein cS22 (253 aa).

A chloroplast-targeting transit peptide spans 1–56; it reads MATFLTNVVSIKPTIFSFQSESFTPLHTRVNVFSSKPFPSLAGTFSRSSRTRFIPY. RRM domains are found at residues 76-154 and 177-253; these read RRVY…ITEK and YKVY…VNKA.

Belongs to the chloroplast-specific ribosomal protein cS22 family. As to quaternary structure, component of the chloroplast small ribosomal subunit (SSU). Mature 70S chloroplast ribosomes of higher plants consist of a small (30S) and a large (50S) subunit. The 30S small subunit contains 1 molecule of ribosomal RNA (16S rRNA) and 24 different proteins. The 50S large subunit contains 3 rRNA molecules (23S, 5S and 4.5S rRNA) and 33 different proteins. In terms of tissue distribution, expressed constitutively in roots, stems, flower buds, flowers and leaves.

It is found in the plastid. Its subcellular location is the chloroplast. In terms of biological role, component of the chloroplast ribosome (chloro-ribosome), a dedicated translation machinery responsible for the synthesis of chloroplast genome-encoded proteins, including proteins of the transcription and translation machinery and components of the photosynthetic apparatus. May have a role in the recruitment of stored chloroplast mRNAs for active protein synthesis. Bind single strand DNA (ssDNA) and RNA in vitro. Exhibits RNA chaperone activity. Negatively regulates resistance responses to abiotic stresses during seed germination (e.g. salt, dehydration, and low temperature) and seedling growth (e.g. salt). In Arabidopsis thaliana (Mouse-ear cress), this protein is Small ribosomal subunit protein cS22.